The primary structure comprises 1153 residues: Probable RNA-dependent RNA polymerase 3 (1153 aa).

It belongs to the RdRP family. Expressed in shoot apical meristem (SAM) and panicles.

The catalysed reaction is RNA(n) + a ribonucleoside 5'-triphosphate = RNA(n+1) + diphosphate. In terms of biological role, probably involved in the RNA silencing pathway and required for the generation of small interfering RNAs (siRNAs). The polypeptide is Probable RNA-dependent RNA polymerase 3 (RDR3) (Oryza sativa subsp. japonica (Rice)).